The primary structure comprises 189 residues: Thymidine kinase (189 aa).

ATP-binding positions include 9–16 (GTMNSGKT) and 85–88 (DESQ). Glutamate 86 functions as the Proton acceptor in the catalytic mechanism. Positions 143, 146, 180, and 183 each coordinate Zn(2+).

The protein belongs to the thymidine kinase family. In terms of assembly, homotetramer.

It is found in the cytoplasm. It catalyses the reaction thymidine + ATP = dTMP + ADP + H(+). The polypeptide is Thymidine kinase (Streptococcus pyogenes serotype M3 (strain ATCC BAA-595 / MGAS315)).